The chain runs to 275 residues: UDP-Gal:alpha-D-GlcNAc-diphosphoundecaprenol beta-1,3-galactosyltransferase (275 aa).

Belongs to the glycosyltransferase 2 family. The cofactor is Mn(2+).

The protein resides in the cell inner membrane. It catalyses the reaction N-acetyl-alpha-D-glucosaminyl-di-trans,octa-cis-undecaprenyl diphosphate + UDP-alpha-D-galactose = beta-D-Gal-(1-&gt;3)-alpha-D-GlcNAc-di-trans,octa-cis-undecaprenyl diphosphate + UDP + H(+). Its pathway is bacterial outer membrane biogenesis; LPS O-antigen biosynthesis. Its function is as follows. Catalyzes the addition of Gal, the second sugar moiety of the O7-antigen repeating unit, to GlcNAc-pyrophosphate-undecaprenol. The chain is UDP-Gal:alpha-D-GlcNAc-diphosphoundecaprenol beta-1,3-galactosyltransferase (wbbD) from Escherichia coli.